The sequence spans 84 residues: Putative UPF0320 protein YAL068W-A (84 aa).

The protein belongs to the UPF0320 family.

This chain is Putative UPF0320 protein YAL068W-A, found in Saccharomyces cerevisiae (strain ATCC 204508 / S288c) (Baker's yeast).